The sequence spans 612 residues: Threonine--tRNA ligase (612 aa).

Residues 218 to 509 are catalytic; it reads DHRKLGVELG…LSEHFGGNFP (292 aa). Zn(2+) contacts are provided by cysteine 310, histidine 361, and histidine 486.

This sequence belongs to the class-II aminoacyl-tRNA synthetase family. In terms of assembly, homodimer. The cofactor is Zn(2+).

The protein resides in the cytoplasm. It catalyses the reaction tRNA(Thr) + L-threonine + ATP = L-threonyl-tRNA(Thr) + AMP + diphosphate + H(+). Catalyzes the attachment of threonine to tRNA(Thr) in a two-step reaction: L-threonine is first activated by ATP to form Thr-AMP and then transferred to the acceptor end of tRNA(Thr). Also edits incorrectly charged L-seryl-tRNA(Thr). The protein is Threonine--tRNA ligase of Helicobacter pylori (strain G27).